Reading from the N-terminus, the 992-residue chain is Exportin-T (992 aa).

It belongs to the exportin family.

It is found in the nucleus. Its subcellular location is the cytoplasm. Its function is as follows. tRNA nucleus export receptor which facilitates tRNA translocation across the nuclear pore complex. Involved in pre-tRNA splicing, probably by affecting the interaction of pre-tRNA with splicing endonuclease. The protein is Exportin-T (LOS1) of Scheffersomyces stipitis (strain ATCC 58785 / CBS 6054 / NBRC 10063 / NRRL Y-11545) (Yeast).